We begin with the raw amino-acid sequence, 336 residues long: Holliday junction branch migration complex subunit RuvB (336 aa).

Positions 4 to 184 (ADRLISADAI…FGIVQRLEFY (181 aa)) are large ATPase domain (RuvB-L). Residues Arg24, Gly65, Lys68, Thr69, Thr70, 131–133 (EDY), Arg174, Tyr184, and Arg221 contribute to the ATP site. Thr69 lines the Mg(2+) pocket. Residues 185–255 (NVADLQYIVG…VATQALDMLA (71 aa)) are small ATPAse domain (RuvB-S). The tract at residues 258–336 (TEGFDYMDRK…HFGLTREDLG (79 aa)) is head domain (RuvB-H). 3 residues coordinate DNA: Arg294, Arg313, and Arg318.

This sequence belongs to the RuvB family. In terms of assembly, homohexamer. Forms an RuvA(8)-RuvB(12)-Holliday junction (HJ) complex. HJ DNA is sandwiched between 2 RuvA tetramers; dsDNA enters through RuvA and exits via RuvB. An RuvB hexamer assembles on each DNA strand where it exits the tetramer. Each RuvB hexamer is contacted by two RuvA subunits (via domain III) on 2 adjacent RuvB subunits; this complex drives branch migration. In the full resolvosome a probable DNA-RuvA(4)-RuvB(12)-RuvC(2) complex forms which resolves the HJ.

Its subcellular location is the cytoplasm. It catalyses the reaction ATP + H2O = ADP + phosphate + H(+). Its function is as follows. The RuvA-RuvB-RuvC complex processes Holliday junction (HJ) DNA during genetic recombination and DNA repair, while the RuvA-RuvB complex plays an important role in the rescue of blocked DNA replication forks via replication fork reversal (RFR). RuvA specifically binds to HJ cruciform DNA, conferring on it an open structure. The RuvB hexamer acts as an ATP-dependent pump, pulling dsDNA into and through the RuvAB complex. RuvB forms 2 homohexamers on either side of HJ DNA bound by 1 or 2 RuvA tetramers; 4 subunits per hexamer contact DNA at a time. Coordinated motions by a converter formed by DNA-disengaged RuvB subunits stimulates ATP hydrolysis and nucleotide exchange. Immobilization of the converter enables RuvB to convert the ATP-contained energy into a lever motion, pulling 2 nucleotides of DNA out of the RuvA tetramer per ATP hydrolyzed, thus driving DNA branch migration. The RuvB motors rotate together with the DNA substrate, which together with the progressing nucleotide cycle form the mechanistic basis for DNA recombination by continuous HJ branch migration. Branch migration allows RuvC to scan DNA until it finds its consensus sequence, where it cleaves and resolves cruciform DNA. This Pectobacterium carotovorum subsp. carotovorum (strain PC1) protein is Holliday junction branch migration complex subunit RuvB.